Consider the following 258-residue polypeptide: Deoxyribose-phosphate aldolase (258 aa).

Residue Asp-102 is the Proton donor/acceptor of the active site. Lys-165 (schiff-base intermediate with acetaldehyde) is an active-site residue. Residue Lys-199 is the Proton donor/acceptor of the active site.

Belongs to the DeoC/FbaB aldolase family. DeoC type 2 subfamily.

It is found in the cytoplasm. The catalysed reaction is 2-deoxy-D-ribose 5-phosphate = D-glyceraldehyde 3-phosphate + acetaldehyde. It participates in carbohydrate degradation; 2-deoxy-D-ribose 1-phosphate degradation; D-glyceraldehyde 3-phosphate and acetaldehyde from 2-deoxy-alpha-D-ribose 1-phosphate: step 2/2. Functionally, catalyzes a reversible aldol reaction between acetaldehyde and D-glyceraldehyde 3-phosphate to generate 2-deoxy-D-ribose 5-phosphate. The polypeptide is Deoxyribose-phosphate aldolase (Vibrio campbellii (strain ATCC BAA-1116)).